The following is a 339-amino-acid chain: Glycerol-3-phosphate dehydrogenase [NAD(P)+] (339 aa).

Positions 11, 12, and 109 each coordinate NADPH. Sn-glycerol 3-phosphate-binding residues include Lys109, Gly140, and Ser142. An NADPH-binding site is contributed by Ala144. Residues Lys195, Asp249, Ser259, Arg260, and Asn261 each coordinate sn-glycerol 3-phosphate. Lys195 serves as the catalytic Proton acceptor. Arg260 lines the NADPH pocket. Positions 284 and 286 each coordinate NADPH.

This sequence belongs to the NAD-dependent glycerol-3-phosphate dehydrogenase family.

It is found in the cytoplasm. It carries out the reaction sn-glycerol 3-phosphate + NAD(+) = dihydroxyacetone phosphate + NADH + H(+). The enzyme catalyses sn-glycerol 3-phosphate + NADP(+) = dihydroxyacetone phosphate + NADPH + H(+). The protein operates within membrane lipid metabolism; glycerophospholipid metabolism. Its function is as follows. Catalyzes the reduction of the glycolytic intermediate dihydroxyacetone phosphate (DHAP) to sn-glycerol 3-phosphate (G3P), the key precursor for phospholipid synthesis. The polypeptide is Glycerol-3-phosphate dehydrogenase [NAD(P)+] (Lactobacillus helveticus (strain DPC 4571)).